Consider the following 248-residue polypeptide: 14-3-3-like protein G-BOX factor 14 kappa (248 aa).

3 positions are modified to phosphoserine: Ser70, Ser112, and Ser193. Thr214 carries the phosphothreonine modification.

Belongs to the 14-3-3 family. As to quaternary structure, interacts with the isocitrate dehydrogenase IDH3, and malate dehydrogenases MDH1 and MDH2. Interacts with CINV1.

The protein localises to the nucleus. It is found in the cytoplasm. Functionally, is associated with a DNA binding complex that binds to the G box, a well-characterized cis-acting DNA regulatory element found in plant genes. Involved in the regulation of nutrient metabolism. Negative regulator of freezing tolerance that modulates cold-responsive C-repeat-binding factors (CBF) DREB1A AND DREB1B proteins stability by facilitating their ubiquitin-mediated degradation; this processus is counteracted by B1L. The polypeptide is 14-3-3-like protein G-BOX factor 14 kappa (Arabidopsis thaliana (Mouse-ear cress)).